A 634-amino-acid polypeptide reads, in one-letter code: tRNA uridine 5-carboxymethylaminomethyl modification enzyme MnmG (634 aa).

14-19 (GGGHAG) lines the FAD pocket. Residue 279–293 (GPRYCPSIEDKVVRF) participates in NAD(+) binding.

The protein belongs to the MnmG family. Homodimer. Heterotetramer of two MnmE and two MnmG subunits. Requires FAD as cofactor.

It localises to the cytoplasm. In terms of biological role, NAD-binding protein involved in the addition of a carboxymethylaminomethyl (cmnm) group at the wobble position (U34) of certain tRNAs, forming tRNA-cmnm(5)s(2)U34. This is tRNA uridine 5-carboxymethylaminomethyl modification enzyme MnmG from Xanthomonas euvesicatoria pv. vesicatoria (strain 85-10) (Xanthomonas campestris pv. vesicatoria).